The primary structure comprises 105 residues: Urease subunit gamma (105 aa).

The protein belongs to the urease gamma subunit family. As to quaternary structure, heterotrimer of UreA (gamma), UreB (beta) and UreC (alpha) subunits. Three heterotrimers associate to form the active enzyme.

It is found in the cytoplasm. It carries out the reaction urea + 2 H2O + H(+) = hydrogencarbonate + 2 NH4(+). The protein operates within nitrogen metabolism; urea degradation; CO(2) and NH(3) from urea (urease route): step 1/1. The chain is Urease subunit gamma from Bacillus subtilis (strain 168).